The chain runs to 422 residues: Putative nickel insertion protein (422 aa).

This sequence belongs to the LarC family.

The sequence is that of Putative nickel insertion protein from Synechocystis sp. (strain ATCC 27184 / PCC 6803 / Kazusa).